We begin with the raw amino-acid sequence, 1018 residues long: D-2-hydroxyglutarate dehydrogenase (1018 aa).

The region spanning Y48–L281 is the FAD-binding PCMH-type domain. (R)-2-hydroxyglutarate is bound by residues R402 and H500. The region spanning F662–R695 is the 4Fe-4S ferredoxin-type domain. [4Fe-4S] cluster is bound by residues C673, C676, C679, and C683.

It in the N-terminal section; belongs to the FAD-binding oxidoreductase/transferase type 4 family. Homotetramer. The cofactor is [4Fe-4S] cluster. Requires FAD as cofactor.

The enzyme catalyses (R)-2-hydroxyglutarate + A = 2-oxoglutarate + AH2. With respect to regulation, activity is completely inhibited by the addition of 0.5 mM Mn(2+), Ni(2+), or Co(2+) and partially inhibited by 0.5 mM Zn(2+). Its function is as follows. Catalyzes the oxidation of D-2-hydroxyglutarate (D-2-HGA) to 2-oxoglutarate. Appears to be the only D2HGDH in E.coli, providing the way to recycle D-2-HGA produced during L-serine synthesis by SerA, by converting it back to 2-oxoglutarate. The physiological molecule that functions as the primary electron acceptor during D-2-HGA oxidation by YdiJ in E.coli is unknown. Shows strict substrate specificity towards D-2-HGA, since it has no detectable activity on L-2-hydroxyglutarate, L-malate, D-malate, L-lactate, D-lactate, L-tartrate, D-tartrate, L-glycerate, D-glycerate, glutarate, or pyruvate. This chain is D-2-hydroxyglutarate dehydrogenase (ydiJ), found in Escherichia coli (strain K12).